A 164-amino-acid chain; its full sequence is ATP synthase subunit b (164 aa).

A helical membrane pass occupies residues 4–24 (IHFDLTLVVQVLSFLLLVYIL).

The protein belongs to the ATPase B chain family. In terms of assembly, F-type ATPases have 2 components, F(1) - the catalytic core - and F(0) - the membrane proton channel. F(1) has five subunits: alpha(3), beta(3), gamma(1), delta(1), epsilon(1). F(0) has three main subunits: a(1), b(2) and c(10-14). The alpha and beta chains form an alternating ring which encloses part of the gamma chain. F(1) is attached to F(0) by a central stalk formed by the gamma and epsilon chains, while a peripheral stalk is formed by the delta and b chains.

It is found in the cell membrane. F(1)F(0) ATP synthase produces ATP from ADP in the presence of a proton or sodium gradient. F-type ATPases consist of two structural domains, F(1) containing the extramembraneous catalytic core and F(0) containing the membrane proton channel, linked together by a central stalk and a peripheral stalk. During catalysis, ATP synthesis in the catalytic domain of F(1) is coupled via a rotary mechanism of the central stalk subunits to proton translocation. Functionally, component of the F(0) channel, it forms part of the peripheral stalk, linking F(1) to F(0). The chain is ATP synthase subunit b from Desulfitobacterium hafniense (strain Y51).